The following is an 86-amino-acid chain: Photosystem I reaction center subunit PsaK 1 (86 aa).

A run of 2 helical transmembrane segments spans residues 14-34 and 61-81; these read LSWS…AIAF and AVLG…LGLA.

The protein belongs to the PsaG/PsaK family.

It localises to the cellular thylakoid membrane. The protein is Photosystem I reaction center subunit PsaK 1 (psaK1) of Synechocystis sp. (strain ATCC 27184 / PCC 6803 / Kazusa).